Consider the following 217-residue polypeptide: Oxygen-insensitive NAD(P)H nitroreductase (217 aa).

10–14 contacts FMN; that stretch reads RHSTK. The NAD(+) site is built by Lys-14, Thr-41, Thr-67, Asn-71, Lys-74, and Arg-107. FMN is bound at residue Asn-71. FMN contacts are provided by residues 165–166 and 205–207; these read EG and KSR.

The protein belongs to the nitroreductase family. In terms of assembly, homodimer. The cofactor is FMN.

Reduction of a variety of nitroaromatic compounds using NADH (and to lesser extent NADPH) as source of reducing equivalents; two electrons are transferred. In Enterobacter cloacae, this protein is Oxygen-insensitive NAD(P)H nitroreductase.